The primary structure comprises 244 residues: ATP synthase subunit 4, mitochondrial (244 aa).

A mitochondrion-targeting transit peptide spans 1 to 36 (MASRLAKSAICAARVRPVLSSRTIPAAATTLTSTRS).

It belongs to the eukaryotic ATPase B chain family. F-type ATPases have 2 components, CF(1) - the catalytic core - and CF(0) - the membrane proton channel. In yeast, the dimeric form of ATP synthase consists of 17 polypeptides: alpha, beta, gamma, delta, epsilon, 4 (B), 5 (OSCP), 6 (A), 8, 9 (C), d, E (Tim11), f, g, h, i/j and k.

It is found in the mitochondrion. The protein resides in the mitochondrion inner membrane. In terms of biological role, mitochondrial membrane ATP synthase (F(1)F(0) ATP synthase or Complex V) produces ATP from ADP in the presence of a proton gradient across the membrane which is generated by electron transport complexes of the respiratory chain. F-type ATPases consist of two structural domains, F(1) - containing the extramembraneous catalytic core, and F(0) - containing the membrane proton channel, linked together by a central stalk and a peripheral stalk. During catalysis, ATP synthesis in the catalytic domain of F(1) is coupled via a rotary mechanism of the central stalk subunits to proton translocation. Part of the complex F(0) domain and the peripheric stalk, which acts as a stator to hold the catalytic alpha(3)beta(3) subcomplex and subunit a/ATP6 static relative to the rotary elements. This is ATP synthase subunit 4, mitochondrial (ATP4) from Paracoccidioides brasiliensis.